The chain runs to 220 residues: Small ribosomal subunit protein eS8 (220 aa).

2 disordered regions span residues 1–41 (MGIS…LSSN) and 131–151 (AKKD…KKSN). Residues 8-26 (MHKRRATGGKQKAWRKKRK) show a composition bias toward basic residues.

The protein belongs to the eukaryotic ribosomal protein eS8 family.

The chain is Small ribosomal subunit protein eS8 (RPS8) from Oryza sativa subsp. japonica (Rice).